Consider the following 168-residue polypeptide: Mitochondrial import inner membrane translocase subunit TIM14 (168 aa).

The segment covering 1-12 has biased composition (polar residues); it reads MSSQSNTGNSIE. Residues 1 to 29 are disordered; that stretch reads MSSQSNTGNSIEAPQLPIPGQTNGSANVT. The Mitochondrial intermembrane segment spans residues 1–65; it reads MSSQSNTGNS…QALNYMGEHP (65 aa). A helical transmembrane segment spans residues 66–83; the sequence is VITGFGAFLTLYFTAGAY. Residues 84-168 are Mitochondrial matrix-facing; that stretch reads KSISKGLNGG…DFLEKRGISK (85 aa). One can recognise a J domain in the interval 112–168; that stretch reads EALQILNLTENTLTKKKLKEVHRKIMLANHPDKGGSPFLATKINEAKDFLEKRGISK.

The protein belongs to the TIM14 family. As to quaternary structure, homodimer and heterodimer with PAM16/TIM16. Homodimerization may not be relevant in vivo, while heterodimerization is essential for activity regulation of mtHSP70. Component of the PAM complex, at least composed of mtHsp70, MGE1, TIM44, PAM16, PAM17 and PAM18/TIM14. Interacts directly with mtHsp70. Interacts directly with TIM17 subunit of the TIM23 complex.

It is found in the mitochondrion inner membrane. Essential component of the PAM complex, a complex required for the translocation of transit peptide-containing proteins from the inner membrane into the mitochondrial matrix in an ATP-dependent manner. In the complex, it is required to stimulate activity of mtHSP70 (SSC1). This chain is Mitochondrial import inner membrane translocase subunit TIM14 (PAM18), found in Saccharomyces cerevisiae (strain ATCC 204508 / S288c) (Baker's yeast).